The chain runs to 301 residues: Chitin deacetylase 1 (301 aa).

The signal sequence occupies residues 1–24 (MKIFNTIQSVLFAAFFLKQGNCLA). Residues asparagine 26, asparagine 50, and asparagine 68 are each glycosylated (N-linked (GlcNAc...) asparagine). Cysteine 107 and cysteine 290 are oxidised to a cystine. Residues 108 to 288 (FKLSQTFDDG…LIGSDQLTIA (181 aa)) enclose the NodB homology domain. Residue aspartate 115 is the Proton acceptor of the active site. Aspartate 115 is an acetate binding site. Co(2+)-binding residues include aspartate 116, histidine 162, and histidine 166. Asparagine 189 carries N-linked (GlcNAc...) asparagine glycosylation. Tyrosine 203 is an acetate binding site. Residue histidine 263 is the Proton donor of the active site.

This sequence belongs to the polysaccharide deacetylase family. Co(2+) is required as a cofactor.

The protein localises to the prospore. The enzyme catalyses [(1-&gt;4)-N-acetyl-beta-D-glucosaminyl](n) + n H2O = chitosan + n acetate. Functionally, hydrolyzes the N-acetamido groups of N-acetyl-D-glucosamine residues in chitin to form chitosan and acetate. Chitosan is a component of the spore wall. In Saccharomyces cerevisiae (strain ATCC 204508 / S288c) (Baker's yeast), this protein is Chitin deacetylase 1.